The primary structure comprises 144 residues: TSC22 domain family protein 1 (144 aa).

The interval 77–98 is leucine-zipper; it reads LKEQIKELIEKNSQLEQENNLL. Residues 109–144 form a disordered region; that stretch reads QFQAQLQTGSPPATTQPQGSTQPPAQPASQGSGPTA.

Belongs to the TSC-22/Dip/Bun family. In terms of assembly, forms homodimers. Forms a heterodimer with TSC22D4/THG1. Interacts with histone H1-2. Interacts with GNL3.

The protein resides in the cytoplasm. Its subcellular location is the nucleus. It is found in the mitochondrion. In terms of biological role, transcriptional repressor. Plays a role in the repression of hematopoietic precursor cell growth. Promotes IL2 deprivation-induced apoptosis in T-lymphocytes, via repression of TSC22D3/GILZ transcription and activation of the caspase cascade. Positively regulates cell death in response to TGFB3 during mammary gland involution. This Bathyergus suillus (Cape dune mole rat) protein is TSC22 domain family protein 1.